The chain runs to 258 residues: Acetylglutamate kinase (258 aa).

Residues Gly44 to Gly45, Arg66, and Asn158 contribute to the substrate site. Residues Asp181–Leu186 and Ile209–Thr211 contribute to the ATP site.

This sequence belongs to the acetylglutamate kinase family. ArgB subfamily. Homodimer.

It is found in the cytoplasm. The enzyme catalyses N-acetyl-L-glutamate + ATP = N-acetyl-L-glutamyl 5-phosphate + ADP. The protein operates within amino-acid biosynthesis; L-arginine biosynthesis; N(2)-acetyl-L-ornithine from L-glutamate: step 2/4. Catalyzes the ATP-dependent phosphorylation of N-acetyl-L-glutamate. This is Acetylglutamate kinase from Escherichia coli O6:K15:H31 (strain 536 / UPEC).